A 388-amino-acid polypeptide reads, in one-letter code: Proteasomal ubiquitin receptor ADRM1 homolog rpn1302 (388 aa).

Residues Arg15–Pro132 form the Pru domain. 2 disordered regions span residues Arg202–Thr227 and Ser368–Glu388. A compositionally biased stretch (acidic residues) spans Ser368–Asp377. Over residues Val378–Glu388 the composition is skewed to basic and acidic residues.

Belongs to the ADRM1 family. Component of the 19S proteasome regulatory particle complex. The 2 S.pombe rpn13 homologs, rpn1301 and rpn1302 are present at a 0.2-1 ratio.

It is found in the cytoplasm. The protein resides in the nucleus. In terms of biological role, component of the 26S proteasome, a multiprotein complex involved in the ATP-dependent degradation of ubiquitinated proteins. This complex plays a key role in the maintenance of protein homeostasis by removing misfolded or damaged proteins, which could impair cellular functions, and by removing proteins whose functions are no longer required. Therefore, the proteasome participates in numerous cellular processes, including cell cycle progression, apoptosis, or DNA damage repair. Within the complex, functions as a proteasomal ubiquitin receptor. The sequence is that of Proteasomal ubiquitin receptor ADRM1 homolog rpn1302 (rpn1302) from Schizosaccharomyces pombe (strain 972 / ATCC 24843) (Fission yeast).